Reading from the N-terminus, the 398-residue chain is Phosphoglycerate kinase (398 aa).

Substrate is bound by residues 21-23 (DFN), Arg36, 59-62 (HLGR), Arg119, and Arg157. Residues Lys208, Gly296, Glu327, and 354–357 (GGDS) each bind ATP.

It belongs to the phosphoglycerate kinase family. Monomer.

It localises to the cytoplasm. It carries out the reaction (2R)-3-phosphoglycerate + ATP = (2R)-3-phospho-glyceroyl phosphate + ADP. Its pathway is carbohydrate degradation; glycolysis; pyruvate from D-glyceraldehyde 3-phosphate: step 2/5. This is Phosphoglycerate kinase from Streptococcus pyogenes serotype M18 (strain MGAS8232).